We begin with the raw amino-acid sequence, 61 residues long: Small ribosomal subunit protein uS14B (61 aa).

Residues C24, C27, C40, and C43 each coordinate Zn(2+).

The protein belongs to the universal ribosomal protein uS14 family. Zinc-binding uS14 subfamily. Part of the 30S ribosomal subunit. Contacts proteins S3 and S10. Requires Zn(2+) as cofactor.

Binds 16S rRNA, required for the assembly of 30S particles and may also be responsible for determining the conformation of the 16S rRNA at the A site. This chain is Small ribosomal subunit protein uS14B, found in Pediococcus pentosaceus (strain ATCC 25745 / CCUG 21536 / LMG 10740 / 183-1w).